The sequence spans 236 residues: Leucyl/phenylalanyl-tRNA--protein transferase (236 aa).

It belongs to the L/F-transferase family.

Its subcellular location is the cytoplasm. It catalyses the reaction N-terminal L-lysyl-[protein] + L-leucyl-tRNA(Leu) = N-terminal L-leucyl-L-lysyl-[protein] + tRNA(Leu) + H(+). The catalysed reaction is N-terminal L-arginyl-[protein] + L-leucyl-tRNA(Leu) = N-terminal L-leucyl-L-arginyl-[protein] + tRNA(Leu) + H(+). The enzyme catalyses L-phenylalanyl-tRNA(Phe) + an N-terminal L-alpha-aminoacyl-[protein] = an N-terminal L-phenylalanyl-L-alpha-aminoacyl-[protein] + tRNA(Phe). Functions in the N-end rule pathway of protein degradation where it conjugates Leu, Phe and, less efficiently, Met from aminoacyl-tRNAs to the N-termini of proteins containing an N-terminal arginine or lysine. The sequence is that of Leucyl/phenylalanyl-tRNA--protein transferase from Vibrio parahaemolyticus serotype O3:K6 (strain RIMD 2210633).